Consider the following 272-residue polypeptide: Adenylate kinase (272 aa).

Position 55–60 (55–60 (GAGKGT)) interacts with ATP. The segment at 75–104 (ATGDMLRSQVAKKTPLGKEAKKIMDQGGLV) is NMP. AMP contacts are provided by residues threonine 76, arginine 81, 102-104 (GLV), 131-134 (GFPR), and glutamine 138. The segment at 172–209 (GRLVHPASGRSYHKIFNPPKQDMKDDITGEPLIQRSDD) is LID. Residues arginine 173 and 182 to 183 (SY) contribute to the ATP site. Arginine 206 and arginine 217 together coordinate AMP. Glutamine 245 serves as a coordination point for ATP.

The protein belongs to the adenylate kinase family. AK2 subfamily. In terms of assembly, monomer.

It localises to the cytoplasm. It is found in the cytosol. The protein resides in the mitochondrion intermembrane space. It carries out the reaction AMP + ATP = 2 ADP. Functionally, catalyzes the reversible transfer of the terminal phosphate group between ATP and AMP. Plays an important role in cellular energy homeostasis and in adenine nucleotide metabolism. Adenylate kinase activity is critical for regulation of the phosphate utilization and the AMP de novo biosynthesis pathways. The protein is Adenylate kinase (adk1) of Talaromyces marneffei (Penicillium marneffei).